The following is a 183-amino-acid chain: Protein vem-1 (183 aa).

The chain crosses the membrane as a helical span at residues 9–29 (FTMYDAVFLVVVLGFFFYWLT). The 100-residue stretch at 47–146 (MSDMTVEELR…FKYLTVGRLV (100 aa)) folds into the Cytochrome b5 heme-binding domain.

The protein belongs to the cytochrome b5 family. MAPR subfamily. Interacts with unc-40 (via cytoplasmic domain). Expressed in the AVG pioneer midline neuron and in several nerve ring neurons that extend projecting axons into the right ventral nerve cord.

The protein localises to the membrane. It is found in the cell projection. It localises to the axon. Functionally, transmembrane protein required for the axon guidance of a subset of ventral nerve cord-associated interneurons and motor neurons. May function with the netrin receptor unc-40 in axon guidance. The polypeptide is Protein vem-1 (Caenorhabditis elegans).